The following is a 156-amino-acid chain: UPF0225 protein PFLU_1319 (156 aa).

This sequence belongs to the UPF0225 family.

The sequence is that of UPF0225 protein PFLU_1319 from Pseudomonas fluorescens (strain SBW25).